We begin with the raw amino-acid sequence, 598 residues long: Fructan 6-exohydrolase (598 aa).

The first 30 residues, 1 to 30, serve as a signal peptide directing secretion; it reads MAARLPLAACVVAFHLCLLLSSLVRSPSTA. Asp65 is a catalytic residue. Asn93, Asn288, and Asn351 each carry an N-linked (GlcNAc...) asparagine glycan. The cysteines at positions 451 and 497 are disulfide-linked. Asn572 carries an N-linked (GlcNAc...) asparagine glycan.

The protein belongs to the glycosyl hydrolase 32 family. Expressed in leaves, stems, roots and inflorescences. Maximum expression is detected in stems, particularly the penultimate internode.

It carries out the reaction Hydrolysis of terminal, non-reducing (2-&gt;6)-linked beta-D-fructofuranose residues in fructans.. Not inhibited by sucrose. Functionally, hydrolyzes levan-type beta-(2-&gt;6)-linked fructans to fructose, but not inulin-type beta-(2-&gt;1)-linked fructans. The protein is Fructan 6-exohydrolase of Triticum aestivum (Wheat).